Consider the following 216-residue polypeptide: MAYQIDQKMIHDQEPMAEIMPNVITAMSSLLQRVSETNDDLSRPFREHKRISAFNAVTKPSISIRSYMERIFKYADCSDSCYIVAYIYLDRFIQKQPLLPIDSSNVHRLIITSVLVSAKFMDDLCYNNAFYAKVGGITTEEMNLLELDFLFGIGFQLNVTISTYNDYCSSLQREMVMRTMYSPLLEPAFLVRSFHKNLLKNLYDEDHRNSQVTSAV.

This sequence belongs to the cyclin family. Cyclin U/P subfamily. In terms of assembly, interacts with CDKA-1. In terms of tissue distribution, expressed in roots, stems and flowers. Expressed in the shoot apex, leaf primordia and young leaves.

This is Cyclin-U4-2 (CYCU4-2) from Arabidopsis thaliana (Mouse-ear cress).